The primary structure comprises 346 residues: Phosphate acyltransferase (346 aa).

Belongs to the PlsX family. Homodimer. Probably interacts with PlsY.

The protein localises to the cytoplasm. It carries out the reaction a fatty acyl-[ACP] + phosphate = an acyl phosphate + holo-[ACP]. The protein operates within lipid metabolism; phospholipid metabolism. Catalyzes the reversible formation of acyl-phosphate (acyl-PO(4)) from acyl-[acyl-carrier-protein] (acyl-ACP). This enzyme utilizes acyl-ACP as fatty acyl donor, but not acyl-CoA. The sequence is that of Phosphate acyltransferase from Psychromonas ingrahamii (strain DSM 17664 / CCUG 51855 / 37).